The chain runs to 1073 residues: TSC22 domain family protein 1 (1073 aa).

Residues 1-98 (MHQPPESTAA…SQAQLQAQPL (98 aa)) form a required for interaction with TGFBR1 and promotion of TGF-beta signaling region. Disordered regions lie at residues 22 to 110 (MAHP…KKSG), 125 to 205 (ISSN…PHLP), 220 to 288 (LHHH…SPAS), 458 to 486 (VTSERESTSGSSVSSSVSTLSHYTESVGS), 607 to 628 (YSQAAPPVQTPLPGAPPPQQLQ), and 742 to 766 (VQQPSTQVPPSVIQQGAPPSSQVVP). Residues 36 to 45 (GSASALNAAG) are compositionally biased toward low complexity. Positions 58 to 70 (FPPPSLLQPPPPA) are enriched in pro residues. Over residues 84–100 (SLNLLSQAQLQAQPLAP) the composition is skewed to low complexity. Residues 133–142 (EDTESYDDLD) show a composition bias toward acidic residues. Basic residues predominate over residues 220–240 (LHHHHQIHHGHHLQHGHHHPS). A compositionally biased stretch (polar residues) spans 257 to 271 (PVSRKLSTTGSSDSI). Residue Ser-263 is modified to Phosphoserine. Composition is skewed to low complexity over residues 272–288 (TPVAPTSAVSSSGSPAS) and 465–483 (TSGSSVSSSVSTLSHYTES). Positions 614–625 (VQTPLPGAPPPQ) are enriched in pro residues. A compositionally biased stretch (polar residues) spans 742 to 764 (VQQPSTQVPPSVIQQGAPPSSQV). The leucine-zipper stretch occupies residues 1006–1027 (LKEQIKELIEKNSQLEQENNLL). A disordered region spans residues 1037 to 1073 (AQFQAQLQTGSPPATTQPQGTTQPPAQPASQGSGPTA). Over residues 1044–1073 (QTGSPPATTQPQGTTQPPAQPASQGSGPTA) the composition is skewed to low complexity.

It belongs to the TSC-22/Dip/Bun family. As to quaternary structure, forms homodimers. Forms heterodimers. Component of a complex composed of TSC22D1 (via N-terminus), TGFBR1 and TGFBR2; the interaction between TSC22D1 and TGFBR1 is inhibited by SMAD7 and promoted by TGFB1. Interacts with SMAD7; the interaction requires TGF-beta and the interaction is inhibited by TGFBR1. Interacts with TPT1/fortilin; interaction results in the destabilization of TSC22D1 protein and prevents TSC22D1-mediated apoptosis. Interacts with SMAD4 (via N-terminus). Interacts with ACVRL1/ALK1, ACVR1/ALK2, BMPR1A/ALK3, ACVR1B/ALK4, BMPR1B/ALK6, ACVR2A/ACTRII, and BMPR2. Interacts with SMAD6. Interacts with TFE3; the interaction is enhanced in the presence of TGF-beta. In terms of assembly, forms a heterodimer with TSC22D4/THG1. Forms a heterodimer with TSC22D4/THG1. Interacts with histone H1-2. Interacts with GNL3. As to quaternary structure, interacts with histone H1-2. In terms of tissue distribution, ubiquitously expressed in adult tissues. Expressed in the postmitotic epithelial compartment at the top of intestinal mucosal villi.

Its subcellular location is the cytoplasm. The protein localises to the nucleus. It localises to the cell membrane. The protein resides in the mitochondrion. Functionally, transcriptional repressor. Acts on the C-type natriuretic peptide (CNP) promoter. Acts to promote CASP3-mediated apoptosis. Positively regulates TGF-beta signaling by interacting with SMAD7 which inhibits binding of SMAD7 to TGFBR1, preventing recruitment of SMURF ubiquitin ligases to TGFBR1 and inhibiting SMURF-mediated ubiquitination and degradation of TGFBR1. Contributes to enhancement of TGF-beta signaling by binding to and modulating the transcription activator activity of SMAD4. Promotes TGF-beta-induced transcription of COL1A2; via its interaction with TFE3 at E-boxes in the gene proximal promoter. Plays a role in the repression of hematopoietic precursor cell growth. Promotes IL2 deprivation-induced apoptosis in T-lymphocytes, via repression of TSC22D3/GILZ transcription and activation of the caspase cascade. Its function is as follows. May act to negatively regulate TGFB3 signaling and thereby inhibit cell death in mammary gland cells. Positively regulates cell death in response to TGFB3 during mammary gland involution. In Homo sapiens (Human), this protein is TSC22 domain family protein 1.